A 346-amino-acid polypeptide reads, in one-letter code: Heat-inducible transcription repressor HrcA (346 aa).

Belongs to the HrcA family.

Negative regulator of class I heat shock genes (grpE-dnaK-dnaJ and groELS operons). Prevents heat-shock induction of these operons. In Kineococcus radiotolerans (strain ATCC BAA-149 / DSM 14245 / SRS30216), this protein is Heat-inducible transcription repressor HrcA.